Here is a 556-residue protein sequence, read N- to C-terminus: Mitochondrial distribution and morphology protein 34-2 (556 aa).

The 195-residue stretch at 1 to 195 folds into the SMP-LTD domain; that stretch reads MAFNFNWSPL…LPAIIHRLSL (195 aa). 3 disordered regions span residues 206 to 239, 299 to 423, and 440 to 473; these read EEMN…DSLG, TDTS…PVTP, and HLPS…DATP. Positions 299-333 are enriched in polar residues; that stretch reads TDTSEFPSSVISPLSPTLSREQSQMGSMSSLHETA. Over residues 334–357 the composition is skewed to low complexity; the sequence is SNASMQSRPSMSSHSFSTSTYGLS. Over residues 362–374 the composition is skewed to basic residues; that stretch reads RHSKAHARKRKKR. A compositionally biased stretch (basic and acidic residues) spans 375-385; that stretch reads VVDLRRPKTTD. Residues 391–402 are compositionally biased toward polar residues; it reads SDESVMTESSRP. Residues 459–468 are compositionally biased toward basic and acidic residues; that stretch reads ETIRGPKAED.

Belongs to the MDM34 family. Component of the ER-mitochondria encounter structure (ERMES) or MDM complex, composed of mmm1, mdm10, mdm12 and mdm34.

Its subcellular location is the mitochondrion outer membrane. Component of the ERMES/MDM complex, which serves as a molecular tether to connect the endoplasmic reticulum (ER) and mitochondria. Components of this complex are involved in the control of mitochondrial shape and protein biogenesis, and function in nonvesicular lipid trafficking between the ER and mitochondria. Mdm34 is required for the interaction of the ER-resident membrane protein mmm1 and the outer mitochondrial membrane-resident beta-barrel protein mdm10. The sequence is that of Mitochondrial distribution and morphology protein 34-2 from Penicillium rubens (strain ATCC 28089 / DSM 1075 / NRRL 1951 / Wisconsin 54-1255) (Penicillium chrysogenum).